Consider the following 229-residue polypeptide: Large ribosomal subunit protein uL1 (229 aa).

The protein belongs to the universal ribosomal protein uL1 family. As to quaternary structure, part of the 50S ribosomal subunit.

Binds directly to 23S rRNA. The L1 stalk is quite mobile in the ribosome, and is involved in E site tRNA release. In terms of biological role, protein L1 is also a translational repressor protein, it controls the translation of the L11 operon by binding to its mRNA. The chain is Large ribosomal subunit protein uL1 from Leifsonia xyli subsp. xyli (strain CTCB07).